The sequence spans 505 residues: Gap junction alpha-10 protein (505 aa).

Residues 1–16 (MGDWNLLGGILEEVHS) lie on the Cytoplasmic side of the membrane. A helical transmembrane segment spans residues 17 to 37 (HSTIVGKIWLTILFIFRMLVL). Topologically, residues 38-76 (GVAAEDVWDDEQSAFACNTQQPGCNNICYDDAFPISLIR) are extracellular. Residues 77–97 (FWVLQIIFVSSPSLVYMGHAL) traverse the membrane as a helical segment. Residues 98 to 165 (YRLRDFEKQR…TYVLHILTRS (68 aa)) are Cytoplasmic-facing. A helical membrane pass occupies residues 166–186 (VLEVGFMIGQYILYGFQMHPI). Residues 187-209 (YKCTQAPCPNSVDCFVSRPTEKT) lie on the Extracellular side of the membrane. The helical transmembrane segment at 210–230 (IFMLFMHSIAAISLLLNILEI) threads the bilayer. Residues 231–505 (FHLGIRKIMR…IIHETYVYVY (275 aa)) are Cytoplasmic-facing. Over residues 371–383 (TMTASQHRPSSAL) the composition is skewed to polar residues. The segment at 371–491 (TMTASQHRPS…SKSSHVDSPP (121 aa)) is disordered. Residues 437 to 446 (MSEKGQRHSD) show a composition bias toward basic and acidic residues. Positions 447 to 460 (SGSSRSLNSSCLDF) are enriched in low complexity.

The protein belongs to the connexin family. Alpha-type (group II) subfamily. In terms of assembly, a connexon is composed of a hexamer of connexins. As to expression, low levels were detected in skin, heart, kidney, testis, ovary, intestine. Expression not detected in brain, sciatic nerve or liver. According to PubMed:15147297 expression is detected only in horizontal cells in the inner nuclear layer of the retina and not in other neurons of the central nervous system or tissues. Detected in the outer plexiform layer of the retina (at protein level).

The protein localises to the cell membrane. The protein resides in the cell junction. Its subcellular location is the gap junction. Its function is as follows. One gap junction consists of a cluster of closely packed pairs of transmembrane channels, the connexons, through which materials of low MW diffuse from one cell to a neighboring cell. Involved in tracer coupling between horizontal cells of the retina. May play a role in the regulation of horizontal cell patterning. The polypeptide is Gap junction alpha-10 protein (Gja10) (Mus musculus (Mouse)).